Reading from the N-terminus, the 506-residue chain is Histidine ammonia-lyase (506 aa).

The 5-imidazolinone (Ala-Gly) cross-link spans 141–143; the sequence is ASG. Residue Ser142 is modified to 2,3-didehydroalanine (Ser).

This sequence belongs to the PAL/histidase family. In terms of processing, contains an active site 4-methylidene-imidazol-5-one (MIO), which is formed autocatalytically by cyclization and dehydration of residues Ala-Ser-Gly.

Its subcellular location is the cytoplasm. It carries out the reaction L-histidine = trans-urocanate + NH4(+). It participates in amino-acid degradation; L-histidine degradation into L-glutamate; N-formimidoyl-L-glutamate from L-histidine: step 1/3. This chain is Histidine ammonia-lyase, found in Burkholderia multivorans (strain ATCC 17616 / 249).